The chain runs to 385 residues: MKDEPRSTNLFMKLDSVFIWKEPFGLVLIIAPWNYPLNLTLVLLVGALAAGSCVVLKPSEISQGTEKVLAEVLPQYLDQSCFAVVLGGPQETGQLLEHKLDYIFFTGSPRVGKIVMTAATKHLTPVTLELGGKNPCYVDDNCDPQTVANRVAWFCYFNAGQTCVAPDYVLCSPEMQERLLPALQSTITRFYGDDPQSSPNLGHIINQKQFQRLRALLGCSRVAIGGQSNESDRYIAPTVLVDVQETEPVMQEEIFGPILPIVNVQSVDEAIKFINRQEKPLALYAFSNSSQVVNQMLERTSSGSFGGNEGFTYISLLSVPFGGVGHSGMGRYHGKFTFDTFSHHRTCLLAPSGLEKLKEIHYPPYTDWNQQLLRWGMGSQSCTLL.

Position 107 to 112 (107 to 112 (GSPRVG)) interacts with NAD(+). Residues E129 and C163 contribute to the active site. C382 is modified (cysteine methyl ester). The S-geranylgeranyl cysteine moiety is linked to residue C382. Positions 383–385 (TLL) are cleaved as a propeptide — removed in mature form.

Belongs to the aldehyde dehydrogenase family. Post-translationally, geranylgeranylation is important for localization to lipid droplets and enzyme activity. In terms of tissue distribution, salivary gland. Expressed at protein level in placenta.

It is found in the lipid droplet. It catalyses the reaction an aldehyde + NAD(+) + H2O = a carboxylate + NADH + 2 H(+). It carries out the reaction a long-chain fatty aldehyde + NAD(+) + H2O = a long-chain fatty acid + NADH + 2 H(+). The catalysed reaction is a medium-chain fatty aldehyde + NAD(+) + H2O = a medium-chain fatty acid + NADH + 2 H(+). The enzyme catalyses hexadecanoate + NADH + 2 H(+) = hexadecanal + NAD(+) + H2O. It catalyses the reaction octanal + NAD(+) + H2O = octanoate + NADH + 2 H(+). The protein operates within alcohol metabolism; ethanol degradation; acetate from ethanol: step 2/2. In terms of biological role, oxidizes medium and long chain fatty aldehydes in lipid droplets into non-toxic fatty acids. This Homo sapiens (Human) protein is Aldehyde dehydrogenase family 3 member B2 (ALDH3B2).